The sequence spans 145 residues: D-aminoacyl-tRNA deacylase (145 aa).

Positions 137 to 138 match the Gly-cisPro motif, important for rejection of L-amino acids motif; it reads GP.

This sequence belongs to the DTD family. In terms of assembly, homodimer.

It is found in the cytoplasm. It catalyses the reaction glycyl-tRNA(Ala) + H2O = tRNA(Ala) + glycine + H(+). It carries out the reaction a D-aminoacyl-tRNA + H2O = a tRNA + a D-alpha-amino acid + H(+). Its function is as follows. An aminoacyl-tRNA editing enzyme that deacylates mischarged D-aminoacyl-tRNAs. Also deacylates mischarged glycyl-tRNA(Ala), protecting cells against glycine mischarging by AlaRS. Acts via tRNA-based rather than protein-based catalysis; rejects L-amino acids rather than detecting D-amino acids in the active site. By recycling D-aminoacyl-tRNA to D-amino acids and free tRNA molecules, this enzyme counteracts the toxicity associated with the formation of D-aminoacyl-tRNA entities in vivo and helps enforce protein L-homochirality. The chain is D-aminoacyl-tRNA deacylase from Pseudoalteromonas translucida (strain TAC 125).